A 36-amino-acid polypeptide reads, in one-letter code: Pancreatic polypeptide (36 aa).

Tyrosine amide is present on Y36.

This sequence belongs to the NPY family.

The protein localises to the secreted. Functionally, hormone secreted by pancreatic cells that acts as a regulator of pancreatic and gastrointestinal functions probably by signaling through the G protein-coupled receptor NPY4R2. This is Pancreatic polypeptide (PPY) from Tapirus pinchaque (Mountain tapir).